The following is a 340-amino-acid chain: Ephrin-B3 (340 aa).

A signal peptide spans 1–27 (MGPPHSGPGGVRVGALLLLGVLGLVSG). Residues 28–167 (LSLEPVYWNS…TRGMKVLLRV (140 aa)) enclose the Ephrin RBD domain. The Extracellular segment spans residues 28-226 (LSLEPVYWNS…EGPLPPPSMP (199 aa)). 2 disulfides stabilise this stretch: cysteine 62-cysteine 104 and cysteine 92-cysteine 156. The tract at residues 168–225 (GQSPRGGAVPRKPVSEMPMERDRGAAHSLEPGKENLPGDPTSNATSRGAEGPLPPPSM) is disordered. The segment covering 185 to 200 (PMERDRGAAHSLEPGK) has biased composition (basic and acidic residues). Residue asparagine 210 is glycosylated (N-linked (GlcNAc...) asparagine). The helical transmembrane segment at 227-247 (AVAGAAGGLALLLLGVAGAGG) threads the bilayer. The Cytoplasmic segment spans residues 248-340 (AMCWRRRRAK…QSPPNIYYKV (93 aa)). The segment at 254–298 (RRAKPSESRHPGPGSFGRGGSLGLGGGGGMGPREAEPGELGIALR) is disordered. Positions 267-284 (GSFGRGGSLGLGGGGGMG) are enriched in gly residues. Arginine 271 carries the omega-N-methylarginine modification. Phosphoserine is present on serine 274. The PDZ-binding motif lies at 338–340 (YKV).

It belongs to the ephrin family. Interacts with GRIP1 and GRIP2. As to quaternary structure, (Microbial infection) Interacts with nipah virus and hendra virus glycoprotein. In terms of tissue distribution, highly expressed in brain; expressed in embryonic floor plate, roof plate and hindbrain segments.

Its subcellular location is the membrane. In terms of biological role, cell surface transmembrane ligand for Eph receptors, a family of receptor tyrosine kinases which are crucial for migration, repulsion and adhesion during neuronal, vascular and epithelial development. Binds promiscuously Eph receptors residing on adjacent cells, leading to contact-dependent bidirectional signaling into neighboring cells. The signaling pathway downstream of the receptor is referred to as forward signaling while the signaling pathway downstream of the ephrin ligand is referred to as reverse signaling. May play a pivotal role in forebrain function. Binds to, and induce the collapse of, commissural axons/growth cones in vitro. May play a role in constraining the orientation of longitudinally projecting axons. Functionally, (Microbial infection) Acts as a receptor for nipah virus and hendra virus. The protein is Ephrin-B3 (EFNB3) of Homo sapiens (Human).